The sequence spans 142 residues: Large ribosomal subunit protein uL13 (142 aa).

This sequence belongs to the universal ribosomal protein uL13 family. Part of the 50S ribosomal subunit.

This protein is one of the early assembly proteins of the 50S ribosomal subunit, although it is not seen to bind rRNA by itself. It is important during the early stages of 50S assembly. The chain is Large ribosomal subunit protein uL13 from Nitrosococcus oceani (strain ATCC 19707 / BCRC 17464 / JCM 30415 / NCIMB 11848 / C-107).